The following is a 224-amino-acid chain: Imidazoleglycerol-phosphate dehydratase (224 aa).

The protein belongs to the imidazoleglycerol-phosphate dehydratase family.

It carries out the reaction D-erythro-1-(imidazol-4-yl)glycerol 3-phosphate = 3-(imidazol-4-yl)-2-oxopropyl phosphate + H2O. It functions in the pathway amino-acid biosynthesis; L-histidine biosynthesis; L-histidine from 5-phospho-alpha-D-ribose 1-diphosphate: step 6/9. This chain is Imidazoleglycerol-phosphate dehydratase (HIS3), found in Cyberlindnera jadinii (Torula yeast).